Here is a 1101-residue protein sequence, read N- to C-terminus: Type VI secretion system component TssM1 (1101 aa).

A helical membrane pass occupies residues 371–391; the sequence is LTIGALSATALVVLAVTAVWI.

It is found in the cell inner membrane. Core component of the type VI (T6SS) secretion system that plays a role in the release of toxins targeting both eukaryotic and prokaryotic species. Plays an essential role in stabilization of assembled TssK1 structure at a fixed perimembrane site. The chain is Type VI secretion system component TssM1 from Pseudomonas aeruginosa (strain ATCC 15692 / DSM 22644 / CIP 104116 / JCM 14847 / LMG 12228 / 1C / PRS 101 / PAO1).